The primary structure comprises 124 residues: Glucagon-1 (124 aa).

The signal sequence occupies residues 1–25 (MKRIHSLAGILLVLGLIQSSCRVLM). The segment at 28–54 (ADPSSSLEADSTLKDEPRELSNMKRHS) is disordered. Residues 38 to 54 (STLKDEPRELSNMKRHS) show a composition bias toward basic and acidic residues. Positions 84–88 (SGVAE) are excised as a propeptide.

The protein belongs to the glucagon family.

Its subcellular location is the secreted. Functionally, glucagon plays a key role in glucose metabolism and homeostasis. Regulates blood glucose by increasing gluconeogenesis and decreasing glycolysis. The polypeptide is Glucagon-1 (gcg1) (Lophius americanus (American angler)).